We begin with the raw amino-acid sequence, 172 residues long: 3-hydroxydecanoyl-[acyl-carrier-protein] dehydratase (172 aa).

His-71 is a catalytic residue.

This sequence belongs to the thioester dehydratase family. FabA subfamily. As to quaternary structure, homodimer.

It is found in the cytoplasm. It catalyses the reaction a (3R)-hydroxyacyl-[ACP] = a (2E)-enoyl-[ACP] + H2O. The catalysed reaction is (3R)-hydroxydecanoyl-[ACP] = (2E)-decenoyl-[ACP] + H2O. It carries out the reaction (2E)-decenoyl-[ACP] = (3Z)-decenoyl-[ACP]. It functions in the pathway lipid metabolism; fatty acid biosynthesis. Necessary for the introduction of cis unsaturation into fatty acids. Catalyzes the dehydration of (3R)-3-hydroxydecanoyl-ACP to E-(2)-decenoyl-ACP and then its isomerization to Z-(3)-decenoyl-ACP. Can catalyze the dehydratase reaction for beta-hydroxyacyl-ACPs with saturated chain lengths up to 16:0, being most active on intermediate chain length. The polypeptide is 3-hydroxydecanoyl-[acyl-carrier-protein] dehydratase (Salmonella agona (strain SL483)).